We begin with the raw amino-acid sequence, 232 residues long: Peptidyl-prolyl cis-trans isomerase FKBP18, chloroplastic (232 aa).

The PPIase FKBP-type domain maps to 108 to 226 (GSTAQVHFDC…ELNIELLRVT (119 aa)).

It belongs to the FKBP-type PPIase family.

It localises to the plastid. Its subcellular location is the chloroplast thylakoid lumen. The enzyme catalyses [protein]-peptidylproline (omega=180) = [protein]-peptidylproline (omega=0). PPIases accelerate the folding of proteins. It catalyzes the cis-trans isomerization of proline imidic peptide bonds in oligopeptides. This chain is Peptidyl-prolyl cis-trans isomerase FKBP18, chloroplastic (FKBP18), found in Arabidopsis thaliana (Mouse-ear cress).